The primary structure comprises 361 residues: S-adenosylmethionine-dependent nucleotide dehydratase RSAD2 (361 aa).

Residues 69–289 (PTTPTSVNYH…LERHKEVSCL (221 aa)) form the Radical SAM core domain. [4Fe-4S] cluster-binding residues include cysteine 83, cysteine 87, and cysteine 90. Lysine 197 is subject to N6-acetyllysine. Residue lysine 206 forms a Glycyl lysine isopeptide (Lys-Gly) (interchain with G-Cter in ubiquitin) linkage.

Belongs to the radical SAM superfamily. RSAD2 family. As to quaternary structure, homodimer. Interacts with IRAK1 and TRAF6. Interacts with FPPS. Interacts with HADHB. Interacts (via C-terminus) with VAPA/VAP33 (via C-terminus). (Microbial infection) Interacts with human cytomegalovirus/HHV-5 protein vMIA/UL37; this interaction results in RSAD2/viperin relocalization from the endoplasmic reticulum to the mitochondria. In terms of assembly, (Microbial infection) Interacts (via N-terminus) with enterovirus A71 protein 2C; this interaction inhibits viral replication. As to quaternary structure, (Microbial infection) Interacts with herpes simplex virus 1/HHV-1 glycoprotein D; this interaction inhibits HHV-1 replication by facilitating IRF7-mediated IFN-beta production. Requires [4Fe-4S] cluster as cofactor. Acetylated by HAT1. HAT1-mediated acetylation of Lys-197 in turn recruits UBE4A that stimulates RSAD2 polyubiquitination leading to proteasomal degradation. Post-translationally, 'Lys-6'-linked polyubiquitination at Lys-206 leads to RSAD2 protein degradation.

It localises to the endoplasmic reticulum membrane. Its subcellular location is the golgi apparatus. The protein localises to the endoplasmic reticulum. The protein resides in the lipid droplet. It is found in the mitochondrion. It localises to the mitochondrion inner membrane. Its subcellular location is the mitochondrion outer membrane. It carries out the reaction CTP + AH2 + S-adenosyl-L-methionine = 3'-deoxy-3',4'-didehydro-CTP + 5'-deoxyadenosine + L-methionine + A + H2O + H(+). IRAK1 and TRAF6 synergistically activate RSAD2 increasing its activity with CTP as substrate about 10-fold. Interferon-inducible antiviral protein which plays a major role in the cell antiviral state induced by type I and type II interferon. Catalyzes the conversion of cytidine triphosphate (CTP) to 3'-deoxy-3',4'-didehydro-CTP (ddhCTP) via a SAM-dependent radical mechanism. In turn, ddhCTP acts as a chain terminator for the RNA-dependent RNA polymerases from multiple viruses and directly inhibits viral replication. Therefore, inhibits a wide range of DNA and RNA viruses, including human cytomegalovirus (HCMV), hepatitis C virus (HCV), west Nile virus (WNV), dengue virus, sindbis virus, influenza A virus, sendai virus, vesicular stomatitis virus (VSV), zika virus, and human immunodeficiency virus (HIV-1). Also promotes TLR7 and TLR9-dependent production of IFN-beta production in plasmacytoid dendritic cells (pDCs) by facilitating 'Lys-63'-linked ubiquitination of IRAK1 by TRAF6. Plays a role in CD4+ T-cells activation and differentiation. Facilitates T-cell receptor (TCR)-mediated GATA3 activation and optimal T-helper 2 (Th2) cytokine production by modulating NFKB1 and JUNB activities. Can inhibit secretion of soluble proteins. The polypeptide is S-adenosylmethionine-dependent nucleotide dehydratase RSAD2 (Homo sapiens (Human)).